Reading from the N-terminus, the 930-residue chain is MSRRVRRKLEEEKGKDKVVVLPSYPETSISNEEDLVAPELLHGFVDWISLPYDTVLQLFTCLNYRDRASLASTCKTWRCLGASSCLWTSLDLRPHKFDASMAASLASRCVNLHYLRFRGVESADSLIHLKARNLIEVSGDYCKKITDATLSMIVARHEALESLQLGPDFCERITSDAIKAVAFCCPKLKKLRLSGIRDVTSEAIEALAKHCPQLNDLGFLDCLNIDEEALGKVVSVRYLSVAGTSNIKWSIASNNWDKLPKLTGLDVSRTDIGPTAVSRFLTSSQSLKVLCALNCHVLEEDESLISYNRFKGKVLLALFTNVFDGLASIFADNTKKPKDIFAYWRELMKTTKDKTINDFIHWIEWIISHTLLRTAECNPEGLDDFWLNEGAALLLNLMQSSQEDVQERSATGLATFVVVDDENASIDCGRAEAVMKDGGIRLLLELAKSWREGLQSEAAKAIANLSVNANIAKSVAEEGGIKILAGLAKSMNRLVAEEAAGGLWNLSVGEEHKNAIAQAGGVKALVDLIFRWPNGCDGVLERAAGALANLAADDKCSMEVAKAGGVHALVMLARNCKYEGVQEQAARALANLAAHGDSNNNNAAVGQEAGALEALVQLTKSPHEGVRQEAAGALWNLSFDDKNRESISVAGGVEALVALAQSCSNASTGLQERAAGALWGLSVSEANSVAIGREGGVPPLIALARSEAEDVHETAAGALWNLAFNPGNALRIVEEGGVPALVHLCSSSVSKMARFMAALALAYMFDGRMDEYALMIGTSSSESTSKNISLDGARNMALKHIEAFVLSFIDPHIFESPVVSSTPTMLAQVTERARIQEAGHLRCSGAEIGRFVTMLRNPDSTLKACAAFALLQFTIPGGRHAMHHVSLMQNGGESRFLRSAAASAKTPREAKIFTKILLRNLEHHQAESSI.

The Nuclear localization signal signature appears at 3–8; sequence RRVRRK. The F-box domain occupies 44–90; the sequence is FVDWISLPYDTVLQLFTCLNYRDRASLASTCKTWRCLGASSCLWTSL. ARM repeat units follow at residues 172–212, 244–285, 379–418, 428–467, 469–508, 510–552, 554–594, 600–639, 641–683, 685–724, 726–766, 790–831, and 835–875; these read RITS…KHCP, TSNI…TSSQ, PEGL…TFVV, CGRA…NLSV, ANIA…NLSV, EEHK…NLAA, DKCS…NLAA, NNNA…NLSF, DKNR…GLSV, EANS…NLAF, PGNA…YMFD, LDGA…QVTE, and IQEA…QFTI.

The protein belongs to the beta-catenin family. Interacts with SNL1. Interacts with MYB53, MYB92 and MYB93. In terms of tissue distribution, expressed ubiquitously, with higher levels in root tip, pericycle and vasculature.

Its subcellular location is the nucleus. In terms of biological role, promotes lateral root initiation and development, independently of auxin (IAA) and abscisis acid (ABA). The chain is Protein ARABIDILLO 1 (FBX5) from Arabidopsis thaliana (Mouse-ear cress).